The chain runs to 136 residues: Large ribosomal subunit protein uL16c (136 aa).

The protein belongs to the universal ribosomal protein uL16 family. As to quaternary structure, part of the 50S ribosomal subunit.

It localises to the plastid. Its subcellular location is the chloroplast. This Oryza nivara (Indian wild rice) protein is Large ribosomal subunit protein uL16c.